A 469-amino-acid chain; its full sequence is RuvB-like helicase 2 (469 aa).

Position 76-83 (76-83 (GPPSTGKT)) interacts with ATP.

It belongs to the RuvB family. May form heterododecamers with RVB1. Component of the SWR1 chromatin remodeling complex, the INO80 chromatin remodeling complex, and of the R2TP complex.

The protein resides in the nucleus. It catalyses the reaction ATP + H2O = ADP + phosphate + H(+). Functionally, DNA helicase which participates in several chromatin remodeling complexes, including the SWR1 and the INO80 complexes. The SWR1 complex mediates the ATP-dependent exchange of histone H2A for the H2A variant HZT1 leading to transcriptional regulation of selected genes by chromatin remodeling. The INO80 complex remodels chromatin by shifting nucleosomes and is involved in DNA repair. Also involved in pre-rRNA processing. This chain is RuvB-like helicase 2 (rvb2), found in Aspergillus fumigatus (strain ATCC MYA-4609 / CBS 101355 / FGSC A1100 / Af293) (Neosartorya fumigata).